The sequence spans 491 residues: Bifunctional protein GlmU (491 aa).

Residues 1-238 (MTTQPAVPAA…EWEIRGVNDR (238 aa)) form a pyrophosphorylase region. UDP-N-acetyl-alpha-D-glucosamine-binding positions include 14–17 (LAAG), lysine 28, glutamine 81, 86–87 (GT), 110–112 (YGD), glycine 149, glutamate 163, asparagine 178, and asparagine 236. Aspartate 112 is a binding site for Mg(2+). Residue asparagine 236 coordinates Mg(2+). A linker region spans residues 239 to 259 (AQLADLAAEANRRTLRRWMLA). The N-acetyltransferase stretch occupies residues 260–491 (GVTIADPATT…TASTDREIQP (232 aa)). The UDP-N-acetyl-alpha-D-glucosamine site is built by arginine 341 and lysine 359. Histidine 371 functions as the Proton acceptor in the catalytic mechanism. The UDP-N-acetyl-alpha-D-glucosamine site is built by tyrosine 374 and asparagine 385. Acetyl-CoA contacts are provided by residues alanine 388, 394 to 395 (NY), serine 413, and alanine 431. A disordered region spans residues 460-491 (AKRPGTPAAEAAQRANDESTGTTASTDREIQP).

This sequence in the N-terminal section; belongs to the N-acetylglucosamine-1-phosphate uridyltransferase family. In the C-terminal section; belongs to the transferase hexapeptide repeat family. In terms of assembly, homotrimer. Mg(2+) is required as a cofactor.

The protein resides in the cytoplasm. It carries out the reaction alpha-D-glucosamine 1-phosphate + acetyl-CoA = N-acetyl-alpha-D-glucosamine 1-phosphate + CoA + H(+). It catalyses the reaction N-acetyl-alpha-D-glucosamine 1-phosphate + UTP + H(+) = UDP-N-acetyl-alpha-D-glucosamine + diphosphate. Its pathway is nucleotide-sugar biosynthesis; UDP-N-acetyl-alpha-D-glucosamine biosynthesis; N-acetyl-alpha-D-glucosamine 1-phosphate from alpha-D-glucosamine 6-phosphate (route II): step 2/2. It functions in the pathway nucleotide-sugar biosynthesis; UDP-N-acetyl-alpha-D-glucosamine biosynthesis; UDP-N-acetyl-alpha-D-glucosamine from N-acetyl-alpha-D-glucosamine 1-phosphate: step 1/1. It participates in bacterial outer membrane biogenesis; LPS lipid A biosynthesis. Its function is as follows. Catalyzes the last two sequential reactions in the de novo biosynthetic pathway for UDP-N-acetylglucosamine (UDP-GlcNAc). The C-terminal domain catalyzes the transfer of acetyl group from acetyl coenzyme A to glucosamine-1-phosphate (GlcN-1-P) to produce N-acetylglucosamine-1-phosphate (GlcNAc-1-P), which is converted into UDP-GlcNAc by the transfer of uridine 5-monophosphate (from uridine 5-triphosphate), a reaction catalyzed by the N-terminal domain. In Kineococcus radiotolerans (strain ATCC BAA-149 / DSM 14245 / SRS30216), this protein is Bifunctional protein GlmU.